A 101-amino-acid polypeptide reads, in one-letter code: Small ribosomal subunit protein uS14 (101 aa).

A disordered region spans residues 53–72; it reads RDAAAVRVRNRDSHDGRPRG. The span at 61 to 70 shows a compositional bias: basic and acidic residues; sequence RNRDSHDGRP.

Belongs to the universal ribosomal protein uS14 family. Part of the 30S ribosomal subunit. Contacts proteins S3 and S10.

Its function is as follows. Binds 16S rRNA, required for the assembly of 30S particles and may also be responsible for determining the conformation of the 16S rRNA at the A site. This chain is Small ribosomal subunit protein uS14, found in Corynebacterium glutamicum (strain R).